The sequence spans 156 residues: uncharacterized protein (156 aa).

Transmembrane regions (helical) follow at residues 6-26 (LIVLISFLIFYLSIFLAPYFA), 34-54 (FWKFISICLYAVYSLICHQMP), 68-88 (CARCFGIYTGVLVGMIIYPFI), 100-120 (WYLIIALIPMAVDGTTQLIGL), and 129-149 (FITGFIAGFTVVFYILPIFFE).

It localises to the cell membrane. This is an uncharacterized protein from Methanocaldococcus jannaschii (strain ATCC 43067 / DSM 2661 / JAL-1 / JCM 10045 / NBRC 100440) (Methanococcus jannaschii).